The chain runs to 167 residues: Gametocyte-specific factor 1 (167 aa).

Serine 8 carries the phosphoserine modification. 2 consecutive CHHC U11-48K-type zinc fingers follow at residues 14-41 (LLQC…RKNH) and 48-75 (LATC…DDRS). 8 residues coordinate Zn(2+): cysteine 17, histidine 23, histidine 33, cysteine 37, cysteine 51, histidine 57, histidine 67, and cysteine 71.

It belongs to the UPF0224 (FAM112) family.

Its subcellular location is the cytoplasm. Functionally, required for spermatogenesis and is involved in the suppression of retrotransposon transcription in male germ cells. The polypeptide is Gametocyte-specific factor 1 (GTSF1) (Homo sapiens (Human)).